Reading from the N-terminus, the 226-residue chain is Lysosomal-associated transmembrane protein 4B (226 aa).

The next 4 membrane-spanning stretches (helical) occupy residues 26–46, 72–92, 100–120, and 153–173; these read ILLG…LLSA, MCIA…ATYG, WIIP…LVAV, and CLVL…GYLI. Residues 205–221 are required for NEDD4 interaction; it reads PPYDDATVNSATKEPPP.

It belongs to the LAPTM4/LAPTM5 transporter family. As to quaternary structure, homooligomer; upon reaching the lysosomes. Interacts with MCOLN1. Interacts with NEDD4; may play a role in the lysosomal sorting of LAPTM4B; enhances HGS association with NEDD4; mediates inhibition of EGFR degradation. Interacts with PIP5K1C; promotes SNX5 association with LAPTM4B; kinase activity of PIP5K1C is required; interaction is regulated by phosphatidylinositol 4,5-bisphosphate generated by PIP5K1C. Interacts with HGS; promotes HGS ubiquitination. Interacts with SNX5. Interacts with SLC3A2 and SLC7A5; recruits SLC3A2 and SLC7A5 to lysosomes to promote leucine uptake into these organelles and is required for mTORC1 activation. Interacts with LRRC32; decreases TGFB1 production in regulatory T cells. Interacts with BECN1; competes with EGFR for LAPTM4B binding; regulates EGFR activity. Interacts with EGFR; positively correlates with EGFR activation. Undergoes proteolytic cleavage following delivery to the lysosomes. Post-translationally, ubiquitinated by NEDD4. As to expression, strongly expressed in fetal ovary, testis, adrenal gland, liver and uterus, and weakly expressed in the spleen.

The protein resides in the endomembrane system. It localises to the late endosome membrane. It is found in the cell membrane. The protein localises to the cell projection. Its subcellular location is the lysosome membrane. The protein resides in the endosome membrane. It localises to the endosome. It is found in the multivesicular body membrane. The protein localises to the multivesicular body lumen. Required for optimal lysosomal function. Blocks EGF-stimulated EGFR intraluminal sorting and degradation. Conversely by binding with the phosphatidylinositol 4,5-bisphosphate, regulates its PIP5K1C interaction, inhibits HGS ubiquitination and relieves LAPTM4B inhibition of EGFR degradation. Recruits SLC3A2 and SLC7A5 (the Leu transporter) to the lysosome, promoting entry of leucine and other essential amino acid (EAA) into the lysosome, stimulating activation of proton-transporting vacuolar (V)-ATPase protein pump (V-ATPase) and hence mTORC1 activation. Plays a role as negative regulator of TGFB1 production in regulatory T cells. Binds ceramide and facilitates its exit from late endosome in order to control cell death pathways. This Bos taurus (Bovine) protein is Lysosomal-associated transmembrane protein 4B.